Here is a 62-residue protein sequence, read N- to C-terminus: Large ribosomal subunit protein uL30 (62 aa).

This sequence belongs to the universal ribosomal protein uL30 family. Part of the 50S ribosomal subunit.

This is Large ribosomal subunit protein uL30 from Beutenbergia cavernae (strain ATCC BAA-8 / DSM 12333 / CCUG 43141 / JCM 11478 / NBRC 16432 / NCIMB 13614 / HKI 0122).